The following is a 402-amino-acid chain: Zinc finger protein 322 (402 aa).

A C2H2-type 1; atypical zinc finger spans residues 43 to 65 (YQCLECKQNFCENLALIMCERTH). 8 C2H2-type zinc fingers span residues 71–93 (YKCDMCEKTFVQSSDLTSHQRIH), 99–121 (YKCSKCEKSFWHHLALSGHQRTH), 127–149 (YTCDICGKNFGQSSDLLVHQRSH), 155–177 (YLCSECDKCFSRSTNLIRHRRTH), 183–205 (FKCLECEKAFSGKSDLISHQRTH), 211–233 (YKCNKCEKSYRHRSAFIVHKRVH), 239–261 (YKCGACEKCFGQKSDLIVHQRVH), and 267–289 (YKCLECMRSFTRSANLIRHQATH). Residues 293-315 (FKCLEYEKSFNCSSDLIVHQRIH) form a C2H2-type 10; degenerate zinc finger. The C2H2-type 11; degenerate zinc-finger motif lies at 351–373 (YKYTVCDKSFHQSSALLQHQTVH). At Ser391 the chain carries Phosphoserine.

It belongs to the krueppel C2H2-type zinc-finger protein family. Interacts with POU5F1. In terms of tissue distribution, ubiquitous. Highly expressed in heart and skeletal muscle.

The protein localises to the cytoplasm. It is found in the nucleus. Functionally, transcriptional activator. Important for maintenance of pluripotency in embryonic stem cells. Binds directly to the POU5F1 distal enhancer and the NANOG proximal promoter, and enhances expression of both genes. Can also bind to numerous other gene promoters and regulates expression of many other pluripotency factors, either directly or indirectly. Promotes inhibition of MAPK signaling during embryonic stem cell differentiation. The chain is Zinc finger protein 322 (ZNF322) from Homo sapiens (Human).